The primary structure comprises 392 residues: Protein FAM53C (392 aa).

At M1 the chain carries N-acetylmethionine. Positions 78 to 119 are disordered; that stretch reads LRPPSRGNSPKEQPFSQVLRPEPPDPEKLPVPPAPPSKRHCR. The span at 83 to 93 shows a compositional bias: polar residues; sequence RGNSPKEQPFS. 6 positions are modified to phosphoserine: S122, S162, S232, S234, S255, and S273. 2 disordered regions span residues 141–167 and 204–294; these read LWTP…PKRV and RPCA…EDPR. Positions 241 to 256 are enriched in low complexity; that stretch reads ASRFLPSARSSPASSP. The segment covering 278-294 has biased composition (basic and acidic residues); it reads LDARKTGVKRRHEEDPR. Residue S299 is modified to Phosphoserine. Residues 341–364 are disordered; that stretch reads ASCSPTGGSSQVLSESEEEEEGAV.

Belongs to the FAM53 family.

The sequence is that of Protein FAM53C from Homo sapiens (Human).